We begin with the raw amino-acid sequence, 467 residues long: Glutamine synthetase (467 aa).

Residues 11 to 95 enclose the GS beta-grasp domain; the sequence is HDVKWIDLRF…IVCDIIEPST (85 aa). In terms of domain architecture, GS catalytic spans 103–467; sequence PRAIARRAEE…PLEYDLYYSV (365 aa). The Mg(2+) site is built by Glu-128 and Glu-130. Glu-206 contacts ATP. Residues Glu-211 and Glu-219 each contribute to the Mg(2+) site. Residues 263–264 and Gly-264 contribute to the L-glutamate site; that span reads NG. Mg(2+) is bound at residue His-268. ATP-binding positions include 270-272 and Ser-272; that span reads HMS. L-glutamate-binding residues include Arg-320, Glu-326, and Arg-338. 3 residues coordinate ATP: Arg-338, Arg-343, and Lys-351. Glu-356 is a Mg(2+) binding site. L-glutamate is bound at residue Arg-358. Tyr-396 is subject to O-AMP-tyrosine.

It belongs to the glutamine synthetase family. In terms of assembly, oligomer of 12 subunits arranged in the form of two hexameric ring. The cofactor is Mg(2+).

The protein localises to the cytoplasm. The catalysed reaction is L-glutamate + NH4(+) + ATP = L-glutamine + ADP + phosphate + H(+). Its activity is regulated as follows. The activity of this enzyme could be controlled by adenylation under conditions of abundant glutamine. Its function is as follows. Catalyzes the ATP-dependent biosynthesis of glutamine from glutamate and ammonia. The polypeptide is Glutamine synthetase (Azotobacter vinelandii).